A 212-amino-acid polypeptide reads, in one-letter code: Large ribosomal subunit protein uL3 (212 aa).

Belongs to the universal ribosomal protein uL3 family. In terms of assembly, part of the 50S ribosomal subunit. Forms a cluster with proteins L14 and L19.

One of the primary rRNA binding proteins, it binds directly near the 3'-end of the 23S rRNA, where it nucleates assembly of the 50S subunit. This is Large ribosomal subunit protein uL3 from Ruminiclostridium cellulolyticum (strain ATCC 35319 / DSM 5812 / JCM 6584 / H10) (Clostridium cellulolyticum).